The sequence spans 377 residues: Adenosine 3'-phospho 5'-phosphosulfate transporter 2 (377 aa).

A run of 10 helical transmembrane segments spans residues 50–70, 77–97, 115–135, 138–158, 164–184, 195–215, 228–248, 266–286, 293–313, and 317–337; these read LCCG…ELIF, PYGW…GYIE, ALLA…VGYL, PTQV…SVLI, GPMD…FTLA, FGVF…NVQE, VVIY…LLSG, GYAF…LTLV, LAAT…FVFF, and FTIQ…LNVY.

Belongs to the nucleotide-sugar transporter family. SLC35B subfamily.

The protein resides in the golgi apparatus membrane. Mediates the transport of adenosine 3'-phospho 5'-phosphosulfate (PAPS), from cytosol into Golgi. PAPS is a universal sulfuryl donor for sulfation events that take place in the Golgi. Essential for viability. Involved in glycosaminoglycan synthesis and the subsequent signaling. May be involved in hh and dpp signaling by controlling the sulfation of heparan sulfate (HS). The sequence is that of Adenosine 3'-phospho 5'-phosphosulfate transporter 2 from Anopheles gambiae (African malaria mosquito).